We begin with the raw amino-acid sequence, 279 residues long: Protein phosphatase 1 regulatory subunit 3E (279 aa).

Residues Ser-16 and Ser-33 each carry the phosphoserine modification. Residues 28-86 (RSQRPSLEEEPEEEPGEGGTRFGARSRAHAPSRGRRARSAPAGGGGARAPRSRSPDTRK) are disordered. Residues 51–65 (ARSRAHAPSRGRRAR) are compositionally biased toward basic residues. Phosphoserine is present on Ser-66. Positions 87 to 90 (RVRF) match the PP1-binding motif motif. The CBM21 domain maps to 154 to 259 (AARLLTQRIC…NNGGRDYALR (106 aa)). The glycogen-binding motif stretch occupies residues 176 to 198 (GSARVVDLAYEKRVSVRWSADGW). Residues 248 to 256 (WDNNGGRDY) are substrate-binding motif.

As to expression, expressed in skeletal muscle and heart with barely detectable levels in liver.

Functionally, acts as a glycogen-targeting subunit for PP1. PP1 is involved in glycogen metabolism and contributes to the activation of glycogen synthase leading to an increase in glycogen synthesis. The protein is Protein phosphatase 1 regulatory subunit 3E (PPP1R3E) of Homo sapiens (Human).